A 137-amino-acid chain; its full sequence is Regulator of cell cycle RGCC (137 aa).

Disordered regions lie at residues 1–20 and 57–80; these read MKPPAAQGSPAAAAAAAPAL and LERMKRRSSASVSDSSGFSDSESA. Over residues 65–80 the composition is skewed to low complexity; that stretch reads SASVSDSSGFSDSESA. Serine 67, serine 69, serine 71, serine 75, serine 91, and serine 97 each carry phosphoserine. Phosphothreonine; by CDK1 is present on threonine 111.

As to quaternary structure, interacts with SMAD3. Interacts with CDK1 and PLK1. Detected in brain, heart and liver (at protein level). Highly expressed in liver, skeletal muscle, kidney and pancreas. Detected at lower levels in heart, brain and placenta. Detected in aorta endothelial cells. Overexpressed in colon, breast, prostate, bladder, lung, and ovarian cancer tissues.

The protein resides in the cytoplasm. It is found in the nucleus. The protein localises to the cytoskeleton. Its subcellular location is the microtubule organizing center. It localises to the centrosome. Modulates the activity of cell cycle-specific kinases. Enhances CDK1 activity. May contribute to the regulation of the cell cycle. May inhibit growth of glioma cells by promoting arrest of mitotic progression at the G2/M transition. Fibrogenic factor contributing to the pathogenesis of renal fibrosis through fibroblast activation. The polypeptide is Regulator of cell cycle RGCC (RGCC) (Homo sapiens (Human)).